Consider the following 294-residue polypeptide: Proline iminopeptidase (294 aa).

Residues 27-277 (PPLVLLHGGP…GCGHMSFVEK (251 aa)) enclose the AB hydrolase-1 domain. The Nucleophile role is filled by serine 105. Residue aspartate 244 is part of the active site. The Proton donor role is filled by histidine 271.

This sequence belongs to the peptidase S33 family.

It localises to the cell envelope. It catalyses the reaction Release of N-terminal proline from a peptide.. Releases the N-terminal proline from various substrates. This is Proline iminopeptidase from Lactobacillus helveticus (strain DPC 4571).